The primary structure comprises 136 residues: MLQPKRTKFRKVHKGRNRGIAGGTEVSFGSFGLKAIGRGRLTARQIEAARRAMSRAVKRQGKIWIRVFPDKPITEKPLEVRMGKGKGNVEYWVALIQPGKVLYEMDGVSEEVARNAFALAAAKLPFKTTFVTKTVM.

Belongs to the universal ribosomal protein uL16 family. In terms of assembly, part of the 50S ribosomal subunit.

In terms of biological role, binds 23S rRNA and is also seen to make contacts with the A and possibly P site tRNAs. The polypeptide is Large ribosomal subunit protein uL16 (Glaesserella parasuis serovar 5 (strain SH0165) (Haemophilus parasuis)).